The primary structure comprises 435 residues: BAHD acyltransferase BIA1 (435 aa).

Catalysis depends on proton acceptor residues histidine 151 and aspartate 369.

It belongs to the plant acyltransferase family. In terms of tissue distribution, mostly expressed in roots (particularly in the root elongation zone), and, to a lower extent, in seedling, leaves (especially in hydathodes), siliques (e.g. in developing seeds) and flowers.

It is found in the cytoplasm. Monitors brassinosteroids (BR) responses and homeostasis, particularly in the root and hypocotyl in darkness. Promotes flavonoid biosynthesis. This chain is BAHD acyltransferase BIA1, found in Arabidopsis thaliana (Mouse-ear cress).